Consider the following 310-residue polypeptide: Ribonuclease Z (310 aa).

Positions 63, 65, 67, 68, 141, 212, and 270 each coordinate Zn(2+). Catalysis depends on D67, which acts as the Proton acceptor.

It belongs to the RNase Z family. In terms of assembly, homodimer. Requires Zn(2+) as cofactor.

It carries out the reaction Endonucleolytic cleavage of RNA, removing extra 3' nucleotides from tRNA precursor, generating 3' termini of tRNAs. A 3'-hydroxy group is left at the tRNA terminus and a 5'-phosphoryl group is left at the trailer molecule.. In terms of biological role, zinc phosphodiesterase, which displays some tRNA 3'-processing endonuclease activity. Probably involved in tRNA maturation, by removing a 3'-trailer from precursor tRNA. This chain is Ribonuclease Z, found in Limosilactobacillus fermentum (strain NBRC 3956 / LMG 18251) (Lactobacillus fermentum).